The following is a 188-amino-acid chain: CyanoP (188 aa).

The signal sequence occupies residues 1–23 (MLKKSLSTAVVLVTLLLSFTLTA). A lipid anchor (N-palmitoyl cysteine) is attached at cysteine 24. A lipid anchor (S-diacylglycerol cysteine) is attached at cysteine 24.

This sequence belongs to the PsbP family. CyanoP subfamily. As to quaternary structure, monomer. Present in about 3% of photosystem II (PSII) preparations. Purifies with partially assembled PSII complexes, in addition to a small amount of monomeric and dimeric PSII, and trimeric PSI.

The protein resides in the cellular thylakoid membrane. In terms of biological role, plays a role in the early stages of photosystem II (PSII) assembly; binds to D2 (psbD) and may facilitate its incorporation into PSII. Required for optimal photoautotrophic growth in the absence of Ca(2+) or Cl(-), functions in optimizing PSII water oxidation/O(2) evolving activity. Might be involved in assembly of the oxygen evolving complex. This chain is CyanoP, found in Synechocystis sp. (strain ATCC 27184 / PCC 6803 / Kazusa).